We begin with the raw amino-acid sequence, 932 residues long: UPF0182 protein Amet_0022 (932 aa).

A run of 7 helical transmembrane segments spans residues 14–34 (VIIG…SEIL), 60–80 (LQIG…YLIG), 104–124 (ILIL…AGSL), 166–186 (TSIL…MFLI), 208–228 (LLQI…LVLA), 256–276 (VTLW…TGVV), and 286–306 (LLLI…VISL).

This sequence belongs to the UPF0182 family.

Its subcellular location is the cell membrane. The sequence is that of UPF0182 protein Amet_0022 from Alkaliphilus metalliredigens (strain QYMF).